The following is a 536-amino-acid chain: CTP synthase (536 aa).

Positions 1 to 267 (MTKFIFVTGG…DDIVIKRLEL (267 aa)) are amidoligase domain. Serine 13 is a CTP binding site. Position 13 (serine 13) interacts with UTP. Residue 14–19 (SLGKGI) coordinates ATP. Tyrosine 54 is an L-glutamine binding site. Residue aspartate 71 participates in ATP binding. Positions 71 and 141 each coordinate Mg(2+). CTP-binding positions include 148–150 (DIE), 188–193 (KTKPTQ), and lysine 224. Residues 188–193 (KTKPTQ) and lysine 224 each bind UTP. Residue 240 to 242 (RDA) participates in ATP binding. The region spanning 293–535 (TIGLVGKYVS…IEASLNHQQS (243 aa)) is the Glutamine amidotransferase type-1 domain. Residue glycine 355 coordinates L-glutamine. The active-site Nucleophile; for glutamine hydrolysis is the cysteine 382. Residues 383–386 (LGMQ), glutamate 406, and arginine 463 each bind L-glutamine. Residues histidine 508 and glutamate 510 contribute to the active site.

The protein belongs to the CTP synthase family. As to quaternary structure, homotetramer.

The catalysed reaction is UTP + L-glutamine + ATP + H2O = CTP + L-glutamate + ADP + phosphate + 2 H(+). The enzyme catalyses L-glutamine + H2O = L-glutamate + NH4(+). It catalyses the reaction UTP + NH4(+) + ATP = CTP + ADP + phosphate + 2 H(+). It functions in the pathway pyrimidine metabolism; CTP biosynthesis via de novo pathway; CTP from UDP: step 2/2. With respect to regulation, allosterically activated by GTP, when glutamine is the substrate; GTP has no effect on the reaction when ammonia is the substrate. The allosteric effector GTP functions by stabilizing the protein conformation that binds the tetrahedral intermediate(s) formed during glutamine hydrolysis. Inhibited by the product CTP, via allosteric rather than competitive inhibition. Functionally, catalyzes the ATP-dependent amination of UTP to CTP with either L-glutamine or ammonia as the source of nitrogen. Regulates intracellular CTP levels through interactions with the four ribonucleotide triphosphates. In Staphylococcus saprophyticus subsp. saprophyticus (strain ATCC 15305 / DSM 20229 / NCIMB 8711 / NCTC 7292 / S-41), this protein is CTP synthase.